Consider the following 652-residue polypeptide: DNA ligase (652 aa).

NAD(+)-binding positions include 29–33 (DSDYD), 78–79 (SL), and Glu-107. Lys-109 (N6-AMP-lysine intermediate) is an active-site residue. NAD(+) is bound by residues Arg-130, Glu-164, Lys-278, and Lys-302. Residues Cys-395, Cys-398, Cys-413, and Cys-418 each coordinate Zn(2+). One can recognise a BRCT domain in the interval 577 to 652 (NSDAALFGLT…IEDEDWLRQL (76 aa)).

This sequence belongs to the NAD-dependent DNA ligase family. LigA subfamily. Mg(2+) is required as a cofactor. Requires Mn(2+) as cofactor.

The catalysed reaction is NAD(+) + (deoxyribonucleotide)n-3'-hydroxyl + 5'-phospho-(deoxyribonucleotide)m = (deoxyribonucleotide)n+m + AMP + beta-nicotinamide D-nucleotide.. Functionally, DNA ligase that catalyzes the formation of phosphodiester linkages between 5'-phosphoryl and 3'-hydroxyl groups in double-stranded DNA using NAD as a coenzyme and as the energy source for the reaction. It is essential for DNA replication and repair of damaged DNA. This is DNA ligase from Streptococcus pyogenes serotype M4 (strain MGAS10750).